Reading from the N-terminus, the 317-residue chain is 8-oxo-(d)GTP phosphatase (317 aa).

The Nudix hydrolase domain maps to Arg-15 to Lys-148. Substrate-binding positions include Arg-43–Tyr-46, Asp-48, and Lys-53–Lys-55. Mg(2+) contacts are provided by Lys-53, Glu-69, and Glu-73. A Nudix box motif is present at residues Gly-54–Gly-75. Substrate contacts are provided by Tyr-89, Lys-99, Glu-118, and Tyr-136. Residue Glu-118 coordinates Mg(2+).

This sequence belongs to the Nudix hydrolase family. Requires Mg(2+) as cofactor.

The catalysed reaction is 8-oxo-dGTP + H2O = 8-oxo-dGDP + phosphate + H(+). It catalyses the reaction 8-oxo-GTP + H2O = 8-oxo-GDP + phosphate + H(+). Catalyzes the conversion of 8-oxo-dGTP to 8-oxo-dGDP, and 8-oxo-GTP to 8-oxo-GDP. This is 8-oxo-(d)GTP phosphatase from Mycobacterium tuberculosis (strain CDC 1551 / Oshkosh).